Reading from the N-terminus, the 145-residue chain is MKKVLVINGPNLNLLGIREKNIYGSVSYEDVLKSISRKAQELGFEVEFFQSNHEGEIIDKIHRAYFEKVDAIIINPGAYTHYSYAIHDAIKAVNIPTIEVHISNIHAREEFRHKSVIAPACTGQISGFGIKSYIIALYALKEILD.

Tyr23 (proton acceptor) is an active-site residue. Substrate contacts are provided by Asn75, His81, and Asp88. His101 (proton donor) is an active-site residue. Substrate is bound by residues 102–103 (IS) and Arg112.

It belongs to the type-II 3-dehydroquinase family. As to quaternary structure, homododecamer.

The catalysed reaction is 3-dehydroquinate = 3-dehydroshikimate + H2O. Its pathway is metabolic intermediate biosynthesis; chorismate biosynthesis; chorismate from D-erythrose 4-phosphate and phosphoenolpyruvate: step 3/7. Catalyzes a trans-dehydration via an enolate intermediate. The chain is 3-dehydroquinate dehydratase from Caldicellulosiruptor bescii (strain ATCC BAA-1888 / DSM 6725 / KCTC 15123 / Z-1320) (Anaerocellum thermophilum).